Reading from the N-terminus, the 128-residue chain is Large ribosomal subunit protein uL22 (128 aa).

This sequence belongs to the universal ribosomal protein uL22 family. As to quaternary structure, part of the 50S ribosomal subunit.

Its function is as follows. This protein binds specifically to 23S rRNA; its binding is stimulated by other ribosomal proteins, e.g. L4, L17, and L20. It is important during the early stages of 50S assembly. It makes multiple contacts with different domains of the 23S rRNA in the assembled 50S subunit and ribosome. The globular domain of the protein is located near the polypeptide exit tunnel on the outside of the subunit, while an extended beta-hairpin is found that lines the wall of the exit tunnel in the center of the 70S ribosome. The protein is Large ribosomal subunit protein uL22 of Rhodopseudomonas palustris (strain BisB18).